A 202-amino-acid polypeptide reads, in one-letter code: MSTPSFSPRTATVERTTAETDVSVALTLDGDGSYDVDTGVGFFDHMLSLFAKHGALDLEVRCDGDLEVDDHHTVEDVAIGLGRALDDALGDKAHIARYGHAYVPMDDALARAVVDLSGRSYCHLEASFERNQVGGLSTELVEHVWRSVADHARCNLHLTVLRGHNAHHKIEALFKAAARALRTAVRRRADHAEVASTKGTLA.

It belongs to the imidazoleglycerol-phosphate dehydratase family.

The protein localises to the cytoplasm. The enzyme catalyses D-erythro-1-(imidazol-4-yl)glycerol 3-phosphate = 3-(imidazol-4-yl)-2-oxopropyl phosphate + H2O. It participates in amino-acid biosynthesis; L-histidine biosynthesis; L-histidine from 5-phospho-alpha-D-ribose 1-diphosphate: step 6/9. In Salinibacter ruber (strain DSM 13855 / M31), this protein is Imidazoleglycerol-phosphate dehydratase.